The following is an 841-amino-acid chain: MKPGGFWPHLALLGVSLPAVLGWMDQGASRSPNMVPGESQAEETRGFEVTRREGLPSPGLSASCGKKLCSHGSRCLLNRTTGQPSCQCLEVCRPRYMPVCGSDGRLYGNHCELRRAACLLGKRIVSVHSKDCFLKGDMCTMAGYARLKNVLLALQSRRQPLPQGTPRQSLASQKRLLVESLFKDLDADGNGHLGSLELAQYVLKEQDMDGSLNRCSPSDLLRFDDYNSDGSLTLGEFYTAFQVIQLSLAPEDKVSVTTVTVGLSTVLTCAIRGDLRPPIIWKRNGLTLSFLGLEDINDFGEDGSLYITKVTTVHMGNYTCHALGHEQLVQTHVLQVNVPPVIRVYPETQAQEPGVAASLRCHAEGIPLPRIIWLKNGMDVSTQMSKQLSLLANGSELHIGSVRYEDTGAYTCIAKNEVGVDEDISSLFIEDSARKTLANILWREEGLSVGNMFYVFAEDGIVVIHPVDCEVQRRLKPTEKIFMSYEEICPRVEGDATQPCQWASAVNVRNRYIYVAQPALNRVLVVDVQAQKVLQSIGVDPLPVKLSYDKSHDQVWVLSWGDMHKSQPSLQVITEASTGQGQHLIRTPFAGVDNFFIPPTNLIINHIRFGFIFNKTDPAVHKVDLETLMALKTISLRHYGCMPQAMAHTHLGGYFFVQCQQDTPTSTGPQLLIDSVTDSVLGPNSDITGTPHVSPDGRFIVSVSNKGPWLHVQEVTVRGEIQTLYDLKINPGISDLAFQHSFTEGSQYNAYATLDKEPDLLFLELSTGKMGRLKNLKEPPRGPAPTWGGPRRVLRDSGLFGQYLLTPAQESLFLVNGRQNALRCEVSGIKGAATVVWVGEV.

A signal peptide spans 1–22 (MKPGGFWPHLALLGVSLPAVLG). The disordered stretch occupies residues 29–54 (SRSPNMVPGESQAEETRGFEVTRREG). Positions 42–54 (EETRGFEVTRREG) are enriched in basic and acidic residues. Residues 80 to 134 (TTGQPSCQCLEVCRPRYMPVCGSDGRLYGNHCELRRAACLLGKRIVSVHSKDCFL) enclose the Kazal-like domain. 3 cysteine pairs are disulfide-bonded: C86/C118, C92/C111, and C100/C132. EF-hand domains lie at 173 to 208 (QKRL…EQDM) and 225 to 247 (DYNS…IQLS). Residues D186, D188, N190, H192, E197, D225, N227, D229, S231, and E236 each contribute to the Ca(2+) site. Ig-like domains follow at residues 250 to 336 (PEDK…VLQV) and 340 to 425 (PVIR…EDIS). Intrachain disulfides connect C269–C320 and C361–C412. Residue N317 is glycosylated (N-linked (GlcNAc...) asparagine).

The protein resides in the secreted. This chain is Follistatin-related protein 4 (Fstl4), found in Mus musculus (Mouse).